The following is a 479-amino-acid chain: Ribosomal RNA small subunit methyltransferase F (479 aa).

S-adenosyl-L-methionine is bound by residues 125–131, Glu-149, Asp-176, and Asp-194; that span reads AAAPGSK. Cys-247 acts as the Nucleophile in catalysis.

Belongs to the class I-like SAM-binding methyltransferase superfamily. RsmB/NOP family.

The protein resides in the cytoplasm. It catalyses the reaction cytidine(1407) in 16S rRNA + S-adenosyl-L-methionine = 5-methylcytidine(1407) in 16S rRNA + S-adenosyl-L-homocysteine + H(+). Functionally, specifically methylates the cytosine at position 1407 (m5C1407) of 16S rRNA. The protein is Ribosomal RNA small subunit methyltransferase F (rsmF) of Escherichia coli (strain K12).